Reading from the N-terminus, the 372-residue chain is tRNA N6-adenosine threonylcarbamoyltransferase (372 aa).

A divalent metal cation contacts are provided by H133, H137, and Y154. Residues 154 to 158 (YVSGG), D186, G201, E205, and N301 each bind substrate. D330 contributes to the a divalent metal cation binding site.

It belongs to the KAE1 / TsaD family. In terms of assembly, component of the EKC/KEOPS complex composed of at least BUD32, CGI121, GON7, KAE1 and PCC1; the whole complex dimerizes. Requires a divalent metal cation as cofactor.

Its subcellular location is the cytoplasm. It is found in the nucleus. It catalyses the reaction L-threonylcarbamoyladenylate + adenosine(37) in tRNA = N(6)-L-threonylcarbamoyladenosine(37) in tRNA + AMP + H(+). Functionally, component of the EKC/KEOPS complex that is required for the formation of a threonylcarbamoyl group on adenosine at position 37 (t(6)A37) in tRNAs that read codons beginning with adenine. The complex is probably involved in the transfer of the threonylcarbamoyl moiety of threonylcarbamoyl-AMP (TC-AMP) to the N6 group of A37. KAE1 likely plays a direct catalytic role in this reaction, but requires other protein(s) of the complex to fulfill this activity. The EKC/KEOPS complex also promotes both telomere uncapping and telomere elongation. The complex is required for efficient recruitment of transcriptional coactivators. This chain is tRNA N6-adenosine threonylcarbamoyltransferase, found in Candida albicans (strain SC5314 / ATCC MYA-2876) (Yeast).